Reading from the N-terminus, the 304-residue chain is uncharacterized protein (304 aa).

Residues 1–10 (MLWAHRKKRK) are compositionally biased toward basic residues. Residues 1-28 (MLWAHRKKRKAATETTEDKPLESHRAND) form a disordered region. Basic and acidic residues predominate over residues 16-27 (TEDKPLESHRAN). Position 39 is a phosphoserine (S39). Positions 91–101 (KQKISGSSMTK) are enriched in polar residues. Disordered stretches follow at residues 91 to 115 (KQKISGSSMTKEMQRESGKSPSMED), 138 to 160 (SMLQRSTTHRRKGHAESRNISPE), and 190 to 304 (SHTV…IYGS). The segment covering 151 to 160 (HAESRNISPE) has biased composition (basic and acidic residues). Position 158 is a phosphoserine (S158). The segment covering 195 to 206 (SQSRHSNQSHHS) has biased composition (low complexity). The segment covering 208–223 (PSHQSNQSHPVYSSYQ) has biased composition (polar residues). Positions 229–248 (HLSPQSYPSYSSHQSHPGHS) are enriched in low complexity. The span at 249 to 263 (NHQGHSGLSSHQTHL) shows a compositional bias: polar residues. A compositionally biased stretch (low complexity) spans 264-292 (GHSNHQGHPGHSSHQSHQGQPGHPSHQSH).

This is an uncharacterized protein from Mus musculus (Mouse).